Reading from the N-terminus, the 134-residue chain is Small ribosomal subunit protein bS6 (134 aa).

The interval 103-134 (AAPVKSAEEGTEEVAAEAATEAPAETTTTVEG) is disordered. A compositionally biased stretch (low complexity) spans 118–134 (AEAATEAPAETTTTVEG).

Belongs to the bacterial ribosomal protein bS6 family.

Its function is as follows. Binds together with bS18 to 16S ribosomal RNA. The polypeptide is Small ribosomal subunit protein bS6 (Citrifermentans bemidjiense (strain ATCC BAA-1014 / DSM 16622 / JCM 12645 / Bem) (Geobacter bemidjiensis)).